Reading from the N-terminus, the 486-residue chain is MKSDYNKLIFEISKEGRKAYSLPKCDVEEVNLESLIPKEFLSDKELDLPEVSEVDVIRHYTQLSNKNYGVDTGFYPLGSCTMKYNPKLNEDMAVLPGFANIHPYQPEETVQGALELMYKLDKMLAEVAGMERMTLQPAAGAHGELVGLMVIKAYHKKRGDLKRTKIIIPDSAHGTNPASAAVAGFDVVEIKSNPDGSVNIDSLKSALSDEIAGLMLTNPSTLGLFETNIKQIADLVHDAGGLLYYDGANMNAIMGVTRPGDMGFDVIHYNIHKTFSTPHGGGGPGSGPVGVRKDLVEFLPSPVIEKKGEEYVLDYDRPYSIGKIKSFYGHFGILVRAYTYILSYGPALREVSEKAVLNANYMMHKLKEKYYLPIEQVCKHEFVLGGLNEDILGVSTLDIAKRLLDYGYHPPTIYFPLIVNEAMMIEPTETESVETLDQFIDALNKIADEAKETPELLKNAPHHTHVRRIDEAKAARNLIVKWEREQ.

Lys273 carries the N6-(pyridoxal phosphate)lysine modification.

It belongs to the GcvP family. C-terminal subunit subfamily. In terms of assembly, the glycine cleavage system is composed of four proteins: P, T, L and H. In this organism, the P 'protein' is a heterodimer of two subunits. Requires pyridoxal 5'-phosphate as cofactor.

It carries out the reaction N(6)-[(R)-lipoyl]-L-lysyl-[glycine-cleavage complex H protein] + glycine + H(+) = N(6)-[(R)-S(8)-aminomethyldihydrolipoyl]-L-lysyl-[glycine-cleavage complex H protein] + CO2. Functionally, the glycine cleavage system catalyzes the degradation of glycine. The P protein binds the alpha-amino group of glycine through its pyridoxal phosphate cofactor; CO(2) is released and the remaining methylamine moiety is then transferred to the lipoamide cofactor of the H protein. This is Probable glycine dehydrogenase (decarboxylating) subunit 2 from Alkaliphilus oremlandii (strain OhILAs) (Clostridium oremlandii (strain OhILAs)).